The sequence spans 462 residues: 3-isopropylmalate dehydratase large subunit (462 aa).

[4Fe-4S] cluster is bound by residues cysteine 337, cysteine 397, and cysteine 400.

It belongs to the aconitase/IPM isomerase family. LeuC type 1 subfamily. Heterodimer of LeuC and LeuD. Requires [4Fe-4S] cluster as cofactor.

It carries out the reaction (2R,3S)-3-isopropylmalate = (2S)-2-isopropylmalate. The protein operates within amino-acid biosynthesis; L-leucine biosynthesis; L-leucine from 3-methyl-2-oxobutanoate: step 2/4. In terms of biological role, catalyzes the isomerization between 2-isopropylmalate and 3-isopropylmalate, via the formation of 2-isopropylmaleate. The sequence is that of 3-isopropylmalate dehydratase large subunit from Listeria monocytogenes serotype 4a (strain HCC23).